A 427-amino-acid polypeptide reads, in one-letter code: Enolase (427 aa).

Glutamine 163 serves as a coordination point for (2R)-2-phosphoglycerate. Catalysis depends on glutamate 205, which acts as the Proton donor. Mg(2+) contacts are provided by aspartate 242, glutamate 285, and aspartate 312. (2R)-2-phosphoglycerate is bound by residues lysine 337, arginine 366, serine 367, and lysine 388. Lysine 337 serves as the catalytic Proton acceptor.

This sequence belongs to the enolase family. It depends on Mg(2+) as a cofactor.

It is found in the cytoplasm. The protein resides in the secreted. The protein localises to the cell surface. It carries out the reaction (2R)-2-phosphoglycerate = phosphoenolpyruvate + H2O. It functions in the pathway carbohydrate degradation; glycolysis; pyruvate from D-glyceraldehyde 3-phosphate: step 4/5. Its function is as follows. Catalyzes the reversible conversion of 2-phosphoglycerate (2-PG) into phosphoenolpyruvate (PEP). It is essential for the degradation of carbohydrates via glycolysis. The polypeptide is Enolase (Azorhizobium caulinodans (strain ATCC 43989 / DSM 5975 / JCM 20966 / LMG 6465 / NBRC 14845 / NCIMB 13405 / ORS 571)).